The following is a 538-amino-acid chain: Probable folate-biopterin transporter 9, chloroplastic (538 aa).

Residues 1–57 constitute a chloroplast transit peptide; the sequence is MNNPLLSISNPVKFFKPPIPYRISLNTTINKKQKHQSKTLVVKSNKRSTTSLTSSVS. 12 helical membrane-spanning segments follow: residues 85 to 105, 129 to 149, 152 to 172, 178 to 198, 220 to 240, 246 to 266, 309 to 329, 339 to 359, 370 to 390, 395 to 415, 447 to 467, and 479 to 499; these read VLLC…WLAL, LPMV…IGGA, VPYI…LAIF, VLPS…ITEV, ALMA…YCLL, ILFL…LSSK, LIWI…VFCY, SVIG…TVVY, ALIH…YILV, LAFG…AEIL, LCLS…MIGI, and ILIQ…VPML.

Belongs to the major facilitator superfamily. Folate-biopterin transporter (TC 2.A.71) family.

It localises to the plastid. It is found in the chloroplast membrane. Could mediate folate transport. This chain is Probable folate-biopterin transporter 9, chloroplastic, found in Arabidopsis thaliana (Mouse-ear cress).